A 226-amino-acid chain; its full sequence is NADH-quinone oxidoreductase subunit B 2 (226 aa).

[4Fe-4S] cluster-binding residues include cysteine 37, cysteine 38, cysteine 103, and cysteine 132.

It belongs to the complex I 20 kDa subunit family. In terms of assembly, NDH-1 is composed of 14 different subunits. Subunits NuoB, C, D, E, F, and G constitute the peripheral sector of the complex. Requires [4Fe-4S] cluster as cofactor.

It localises to the cell membrane. The enzyme catalyses a quinone + NADH + 5 H(+)(in) = a quinol + NAD(+) + 4 H(+)(out). NDH-1 shuttles electrons from NADH, via FMN and iron-sulfur (Fe-S) centers, to quinones in the respiratory chain. The immediate electron acceptor for the enzyme in this species is believed to be a menaquinone. Couples the redox reaction to proton translocation (for every two electrons transferred, four hydrogen ions are translocated across the cytoplasmic membrane), and thus conserves the redox energy in a proton gradient. The sequence is that of NADH-quinone oxidoreductase subunit B 2 from Salinispora arenicola (strain CNS-205).